Reading from the N-terminus, the 297-residue chain is Phosphoribosylaminoimidazole-succinocarboxamide synthase (297 aa).

The protein belongs to the SAICAR synthetase family.

The enzyme catalyses 5-amino-1-(5-phospho-D-ribosyl)imidazole-4-carboxylate + L-aspartate + ATP = (2S)-2-[5-amino-1-(5-phospho-beta-D-ribosyl)imidazole-4-carboxamido]succinate + ADP + phosphate + 2 H(+). Its pathway is purine metabolism; IMP biosynthesis via de novo pathway; 5-amino-1-(5-phospho-D-ribosyl)imidazole-4-carboxamide from 5-amino-1-(5-phospho-D-ribosyl)imidazole-4-carboxylate: step 1/2. In Methylococcus capsulatus (strain ATCC 33009 / NCIMB 11132 / Bath), this protein is Phosphoribosylaminoimidazole-succinocarboxamide synthase.